The sequence spans 318 residues: Putative HTH-type transcriptional regulatory protein TK0539 (318 aa).

One can recognise an HTH cro/C1-type domain in the interval 131–189; that stretch reads LRELREKHGYSVNELAQLLGVSRKSLLNYERGEQAVSLDVAIQLEEIFDEALAEPIDIL. The H-T-H motif DNA-binding region spans 142 to 161; that stretch reads VNELAQLLGVSRKSLLNYER.

In Thermococcus kodakarensis (strain ATCC BAA-918 / JCM 12380 / KOD1) (Pyrococcus kodakaraensis (strain KOD1)), this protein is Putative HTH-type transcriptional regulatory protein TK0539.